We begin with the raw amino-acid sequence, 321 residues long: Phospho-N-acetylmuramoyl-pentapeptide-transferase (321 aa).

Helical transmembrane passes span 1–21 (MVYL…PVLI), 50–70 (MGGL…IIFI), 76–96 (IILL…DDYI), 112–132 (FLAQ…FNLT), 140–160 (IPFI…IVFW), 173–193 (GLDG…AIMA), 198–218 (ATSI…FLPF), 225–245 (VFMG…ISIM), 250–270 (LSLL…MIQV), and 300–320 (VVTV…WIGV).

The protein belongs to the glycosyltransferase 4 family. MraY subfamily. Mg(2+) is required as a cofactor.

Its subcellular location is the cell membrane. It carries out the reaction UDP-N-acetyl-alpha-D-muramoyl-L-alanyl-gamma-D-glutamyl-L-lysyl-D-alanyl-D-alanine + di-trans,octa-cis-undecaprenyl phosphate = Mur2Ac(oyl-L-Ala-gamma-D-Glu-L-Lys-D-Ala-D-Ala)-di-trans,octa-cis-undecaprenyl diphosphate + UMP. The protein operates within cell wall biogenesis; peptidoglycan biosynthesis. Its function is as follows. Catalyzes the initial step of the lipid cycle reactions in the biosynthesis of the cell wall peptidoglycan: transfers peptidoglycan precursor phospho-MurNAc-pentapeptide from UDP-MurNAc-pentapeptide onto the lipid carrier undecaprenyl phosphate, yielding undecaprenyl-pyrophosphoryl-MurNAc-pentapeptide, known as lipid I. This chain is Phospho-N-acetylmuramoyl-pentapeptide-transferase, found in Staphylococcus saprophyticus subsp. saprophyticus (strain ATCC 15305 / DSM 20229 / NCIMB 8711 / NCTC 7292 / S-41).